We begin with the raw amino-acid sequence, 326 residues long: Pyruvate dehydrogenase E1 component subunit beta (326 aa).

A thiamine diphosphate-binding site is contributed by Glu-59.

As to quaternary structure, heterodimer of an alpha and a beta chain. Thiamine diphosphate serves as cofactor.

The enzyme catalyses N(6)-[(R)-lipoyl]-L-lysyl-[protein] + pyruvate + H(+) = N(6)-[(R)-S(8)-acetyldihydrolipoyl]-L-lysyl-[protein] + CO2. Its function is as follows. The pyruvate dehydrogenase complex catalyzes the overall conversion of pyruvate to acetyl-CoA and CO(2). It contains multiple copies of three enzymatic components: pyruvate dehydrogenase (E1), dihydrolipoamide acetyltransferase (E2) and lipoamide dehydrogenase (E3). This Rickettsia conorii (strain ATCC VR-613 / Malish 7) protein is Pyruvate dehydrogenase E1 component subunit beta (pdhB).